A 357-amino-acid chain; its full sequence is MAVDPRCLLSLCSTISKASSAKGTNDFVKIGMELWQTAQPYLVQALGLQPPPPKVDVDAAVANAGDAHGEQPWVATPLPGQTVRALFIGINYYGTSAALSGCCNDVKQMLATLQKKGLPINEAVILVDEDNFPGRTDQPTRDNIVRYMAWLVKDAKPGDVLFFHYSGHGTQCKSRGDSDEKYDQCIAPVDFQKSGCIVDDDIHKLLFSRLPEKVRLTAVFDCCHSGSIMDLPFTYVCSGGEQASGTPHMKRIREGNDVLGDVMMISGCADEQTSADVKNTATFGTGSTGAGGAATQCITCMLMNNQSLSYGKLLIETRDMLKRKRFKQVPQLSASKAIDLDQTFSLTEMFSVDRSVQ.

The active site involves His168. Positions 183, 199, and 200 each coordinate Ca(2+). Cys223 is a catalytic residue. Asp230 lines the Ca(2+) pocket.

Belongs to the peptidase C14B family.

It localises to the recycling endosome. Its activity is regulated as follows. Activated by Ca(2+). Its function is as follows. Cysteine protease that cleaves specifically after arginine or lysine residues. In the bloodstream form, may cleave inactive metacaspase-4 MCA4 prior to MCA4 secretion. The polypeptide is Metacaspase-3 (Trypanosoma brucei brucei).